The following is a 383-amino-acid chain: MSWQDKIAQGLQRRRDAAAYRTRQVNEGANGRWLQSGERQYLNFSSNDYLGLSQNDEVIAAWQQGARRYGVGSGGSGHVTGYSQPHARLEQQLADWLGYPRALLFISGYAANQAVLTALTDADDRILADKLSHASLLEAAAHSPAQLRRFQHNQPEALQNLLIKPCQGQTLVVTEGVFSMDGDSAPLAALQQQTSAAGGWLLVDDAHGIGVHGEGGRGSCWLQGVQPELLVVTFGKAFGLSGAAVLCQEPVAEYLLQYARHLIYSTAMPPAQACALQAALRQVQQGDALRQQLQQRIRQFRTAAAHLPLQLGASKTAIQPLLVGDNQQSLIWAEQLRAAGLWVTAIRPPTVPPGSARLRITLSAAHQPEDIDRLLEVLYGLCH.

Arg-21 provides a ligand contact to substrate. 108–109 (GY) serves as a coordination point for pyridoxal 5'-phosphate. His-133 lines the substrate pocket. Pyridoxal 5'-phosphate contacts are provided by Ser-179, His-207, and Thr-233. Lys-236 is modified (N6-(pyridoxal phosphate)lysine). Position 350 (Thr-350) interacts with substrate.

It belongs to the class-II pyridoxal-phosphate-dependent aminotransferase family. BioF subfamily. Homodimer. The cofactor is pyridoxal 5'-phosphate.

It carries out the reaction 6-carboxyhexanoyl-[ACP] + L-alanine + H(+) = (8S)-8-amino-7-oxononanoate + holo-[ACP] + CO2. Its pathway is cofactor biosynthesis; biotin biosynthesis. Functionally, catalyzes the decarboxylative condensation of pimeloyl-[acyl-carrier protein] and L-alanine to produce 8-amino-7-oxononanoate (AON), [acyl-carrier protein], and carbon dioxide. This Yersinia pestis bv. Antiqua (strain Angola) protein is 8-amino-7-oxononanoate synthase.